Consider the following 335-residue polypeptide: Holliday junction branch migration complex subunit RuvB (335 aa).

Positions 1–181 (MTRILDNDLI…FGITGHMEYY (181 aa)) are large ATPase domain (RuvB-L). Residues Leu20, Arg21, Gly62, Lys65, Thr66, Thr67, 128 to 130 (EDF), Arg171, Tyr181, and Arg218 contribute to the ATP site. A Mg(2+)-binding site is contributed by Thr66. The segment at 182–252 (QTADLTEIVE…ITDKALTMLD (71 aa)) is small ATPAse domain (RuvB-S). Residues 255–335 (QEGLDYVDQK…GYPYEKTIKT (81 aa)) are head domain (RuvB-H). Residues Arg291, Arg310, Arg312, and Arg315 each coordinate DNA.

Belongs to the RuvB family. In terms of assembly, homohexamer. Forms an RuvA(8)-RuvB(12)-Holliday junction (HJ) complex. HJ DNA is sandwiched between 2 RuvA tetramers; dsDNA enters through RuvA and exits via RuvB. An RuvB hexamer assembles on each DNA strand where it exits the tetramer. Each RuvB hexamer is contacted by two RuvA subunits (via domain III) on 2 adjacent RuvB subunits; this complex drives branch migration. In the full resolvosome a probable DNA-RuvA(4)-RuvB(12)-RuvC(2) complex forms which resolves the HJ.

It is found in the cytoplasm. The enzyme catalyses ATP + H2O = ADP + phosphate + H(+). Functionally, the RuvA-RuvB-RuvC complex processes Holliday junction (HJ) DNA during genetic recombination and DNA repair, while the RuvA-RuvB complex plays an important role in the rescue of blocked DNA replication forks via replication fork reversal (RFR). RuvA specifically binds to HJ cruciform DNA, conferring on it an open structure. The RuvB hexamer acts as an ATP-dependent pump, pulling dsDNA into and through the RuvAB complex. RuvB forms 2 homohexamers on either side of HJ DNA bound by 1 or 2 RuvA tetramers; 4 subunits per hexamer contact DNA at a time. Coordinated motions by a converter formed by DNA-disengaged RuvB subunits stimulates ATP hydrolysis and nucleotide exchange. Immobilization of the converter enables RuvB to convert the ATP-contained energy into a lever motion, pulling 2 nucleotides of DNA out of the RuvA tetramer per ATP hydrolyzed, thus driving DNA branch migration. The RuvB motors rotate together with the DNA substrate, which together with the progressing nucleotide cycle form the mechanistic basis for DNA recombination by continuous HJ branch migration. Branch migration allows RuvC to scan DNA until it finds its consensus sequence, where it cleaves and resolves cruciform DNA. The sequence is that of Holliday junction branch migration complex subunit RuvB from Streptococcus equi subsp. equi (strain 4047).